The following is a 978-amino-acid chain: Monofunctional C1-tetrahydrofolate synthase, mitochondrial (978 aa).

The segment covering 1–10 has biased composition (low complexity); it reads MGTRLPLVLR. The transit peptide at 1–31 directs the protein to the mitochondrion; it reads MGTRLPLVLRQLRRPPQPPGPPRRLRVPCRA. Positions 1 to 71 are disordered; sequence MGTRLPLVLR…SPGGRTPAAR (71 aa). The segment at 31–348 is methylenetetrahydrofolate dehydrogenase and cyclohydrolase; the sequence is ASSGGGGGGG…REQQHRRWRL (318 aa). Positions 33–45 are enriched in gly residues; the sequence is SGGGGGGGGGREG. Lysine 189 carries the N6-acetyllysine; alternate modification. Lysine 189 carries the post-translational modification N6-succinyllysine; alternate. A formyltetrahydrofolate synthetase region spans residues 349–978; the sequence is HCLKLQPLSP…TETEQVKGLF (630 aa). Serine 357 is modified (phosphoserine). An ATP-binding site is contributed by 423 to 430; that stretch reads TPLGEGKS. Position 596 is an N6-succinyllysine (lysine 596).

The protein in the N-terminal section; belongs to the tetrahydrofolate dehydrogenase/cyclohydrolase family. It in the C-terminal section; belongs to the formate--tetrahydrofolate ligase family. In terms of assembly, homodimer. As to expression, detected in most tissues, highest expression found in placenta, thymus and brain. Low expression is found in liver and skeletal muscle. Up-regulated in colon adenocarcinoma.

It is found in the mitochondrion. The enzyme catalyses (6S)-5,6,7,8-tetrahydrofolate + formate + ATP = (6R)-10-formyltetrahydrofolate + ADP + phosphate. The protein operates within one-carbon metabolism; tetrahydrofolate interconversion. May provide the missing metabolic reaction required to link the mitochondria and the cytoplasm in the mammalian model of one-carbon folate metabolism complementing thus the enzymatic activities of MTHFD2. The sequence is that of Monofunctional C1-tetrahydrofolate synthase, mitochondrial from Homo sapiens (Human).